A 439-amino-acid chain; its full sequence is Paraneoplastic antigen-like protein 8A (439 aa).

Positions 208–439 (SALKAETPNN…RRATNESRKV (232 aa)) are disordered. Positions 231–249 (LVRRAGAKSRSRRKKQKKN) are enriched in basic residues. 3 stretches are compositionally biased toward basic and acidic residues: residues 314–326 (GPRE…RAEA), 395–404 (SRREASDQKA), and 423–439 (AKPE…SRKV).

The protein belongs to the PNMA family.

This Homo sapiens (Human) protein is Paraneoplastic antigen-like protein 8A.